The primary structure comprises 259 residues: Hydroxyacylglutathione hydrolase (259 aa).

Residues histidine 56, histidine 58, aspartate 60, histidine 61, histidine 112, aspartate 133, and histidine 171 each coordinate Zn(2+). A compositionally biased stretch (basic and acidic residues) spans 224 to 238 (RTRETSVKEKADERS). The tract at residues 224–245 (RTRETSVKEKADERSSGQNTSQ) is disordered.

This sequence belongs to the metallo-beta-lactamase superfamily. Glyoxalase II family. As to quaternary structure, monomer. Requires Zn(2+) as cofactor.

It catalyses the reaction an S-(2-hydroxyacyl)glutathione + H2O = a 2-hydroxy carboxylate + glutathione + H(+). Its pathway is secondary metabolite metabolism; methylglyoxal degradation; (R)-lactate from methylglyoxal: step 2/2. In terms of biological role, thiolesterase that catalyzes the hydrolysis of S-D-lactoyl-glutathione to form glutathione and D-lactic acid. This chain is Hydroxyacylglutathione hydrolase, found in Pseudomonas savastanoi pv. phaseolicola (strain 1448A / Race 6) (Pseudomonas syringae pv. phaseolicola (strain 1448A / Race 6)).